The sequence spans 81 residues: Photosystem I iron-sulfur center (81 aa).

2 4Fe-4S ferredoxin-type domains span residues 2–31 and 39–68; these read SHSVKIYDTCIGCTQCVRACPTDVLEMIPW and IASAPRTEDCVGCKRCESACPTDFLSVRVY. Residues Cys11, Cys14, Cys17, Cys21, Cys48, Cys51, Cys54, and Cys58 each coordinate [4Fe-4S] cluster.

As to quaternary structure, the eukaryotic PSI reaction center is composed of at least 11 subunits. [4Fe-4S] cluster serves as cofactor.

It is found in the plastid. Its subcellular location is the chloroplast thylakoid membrane. The enzyme catalyses reduced [plastocyanin] + hnu + oxidized [2Fe-2S]-[ferredoxin] = oxidized [plastocyanin] + reduced [2Fe-2S]-[ferredoxin]. Functionally, apoprotein for the two 4Fe-4S centers FA and FB of photosystem I (PSI); essential for photochemical activity. FB is the terminal electron acceptor of PSI, donating electrons to ferredoxin. The C-terminus interacts with PsaA/B/D and helps assemble the protein into the PSI complex. Required for binding of PsaD and PsaE to PSI. PSI is a plastocyanin-ferredoxin oxidoreductase, converting photonic excitation into a charge separation, which transfers an electron from the donor P700 chlorophyll pair to the spectroscopically characterized acceptors A0, A1, FX, FA and FB in turn. The chain is Photosystem I iron-sulfur center from Arabis hirsuta (Hairy rock-cress).